Here is a 302-residue protein sequence, read N- to C-terminus: Large ribosomal subunit protein uL29m (302 aa).

The transit peptide at 1 to 38 (MASSGAARPAASRVLQRCQPFSSSTSCAAPVTTWRTLA) directs the protein to the mitochondrion. The interval 255–302 (EPVADHLETPETSGQEKVGELSPAGAVDPSTILASKTGKPVTDAPRSS) is disordered.

It belongs to the universal ribosomal protein uL29 family. As to quaternary structure, component of the mitochondrial large ribosomal subunit. Mature mitochondrial ribosomes consist of a small (37S) and a large (54S) subunit. The 37S subunit contains at least 33 different proteins and 1 molecule of RNA (15S). The 54S subunit contains at least 45 different proteins and 1 molecule of RNA (21S).

The protein resides in the mitochondrion. This Pyricularia oryzae (strain 70-15 / ATCC MYA-4617 / FGSC 8958) (Rice blast fungus) protein is Large ribosomal subunit protein uL29m (MRPL4).